We begin with the raw amino-acid sequence, 361 residues long: Tetraacyldisaccharide 4'-kinase (361 aa).

68 to 75 (TVGGTGKT) is a binding site for ATP.

Belongs to the LpxK family.

It catalyses the reaction a lipid A disaccharide + ATP = a lipid IVA + ADP + H(+). Its pathway is glycolipid biosynthesis; lipid IV(A) biosynthesis; lipid IV(A) from (3R)-3-hydroxytetradecanoyl-[acyl-carrier-protein] and UDP-N-acetyl-alpha-D-glucosamine: step 6/6. Its function is as follows. Transfers the gamma-phosphate of ATP to the 4'-position of a tetraacyldisaccharide 1-phosphate intermediate (termed DS-1-P) to form tetraacyldisaccharide 1,4'-bis-phosphate (lipid IVA). The chain is Tetraacyldisaccharide 4'-kinase from Pelobacter propionicus (strain DSM 2379 / NBRC 103807 / OttBd1).